We begin with the raw amino-acid sequence, 231 residues long: 7-cyano-7-deazaguanine synthase (231 aa).

8 to 18 (FSGGQDSTTCL) provides a ligand contact to ATP. Zn(2+) contacts are provided by Cys188, Cys197, Cys200, and Cys203.

Belongs to the QueC family. Requires Zn(2+) as cofactor.

The enzyme catalyses 7-carboxy-7-deazaguanine + NH4(+) + ATP = 7-cyano-7-deazaguanine + ADP + phosphate + H2O + H(+). It participates in purine metabolism; 7-cyano-7-deazaguanine biosynthesis. Functionally, catalyzes the ATP-dependent conversion of 7-carboxy-7-deazaguanine (CDG) to 7-cyano-7-deazaguanine (preQ(0)). The chain is 7-cyano-7-deazaguanine synthase from Shigella dysenteriae serotype 1 (strain Sd197).